Reading from the N-terminus, the 243-residue chain is Orotidine 5'-phosphate decarboxylase (243 aa).

Residues Asp-19, Lys-41, Asp-69–Thr-78, Thr-124, Arg-185, Gln-194, Gly-214, and Arg-215 each bind substrate. Residue Lys-71 is the Proton donor of the active site.

The protein belongs to the OMP decarboxylase family. Type 1 subfamily. Homodimer.

It catalyses the reaction orotidine 5'-phosphate + H(+) = UMP + CO2. The protein operates within pyrimidine metabolism; UMP biosynthesis via de novo pathway; UMP from orotate: step 2/2. In terms of biological role, catalyzes the decarboxylation of orotidine 5'-monophosphate (OMP) to uridine 5'-monophosphate (UMP). The polypeptide is Orotidine 5'-phosphate decarboxylase (Xanthomonas campestris pv. campestris (strain B100)).